Consider the following 307-residue polypeptide: Fructose-bisphosphate aldolase (307 aa).

Ser49 serves as a coordination point for D-glyceraldehyde 3-phosphate. The Proton donor role is filled by Asp82. Positions 83, 104, 134, and 180 each coordinate Zn(2+). Gly181 contributes to the dihydroxyacetone phosphate binding site. His210 contacts Zn(2+). Dihydroxyacetone phosphate is bound by residues 211 to 213 (GAS) and 253 to 256 (NTDT).

Belongs to the class II fructose-bisphosphate aldolase family. As to quaternary structure, homodimer. Requires Zn(2+) as cofactor.

It catalyses the reaction beta-D-fructose 1,6-bisphosphate = D-glyceraldehyde 3-phosphate + dihydroxyacetone phosphate. The protein operates within carbohydrate degradation; glycolysis; D-glyceraldehyde 3-phosphate and glycerone phosphate from D-glucose: step 4/4. Catalyzes the aldol condensation of dihydroxyacetone phosphate (DHAP or glycerone-phosphate) with glyceraldehyde 3-phosphate (G3P) to form fructose 1,6-bisphosphate (FBP) in gluconeogenesis and the reverse reaction in glycolysis. The polypeptide is Fructose-bisphosphate aldolase (fba) (Helicobacter pylori (strain ATCC 700392 / 26695) (Campylobacter pylori)).